Here is an 87-residue protein sequence, read N- to C-terminus: Sec-independent protein translocase protein TatA (87 aa).

The helical transmembrane segment at G3–A23 threads the bilayer. Residues M47–A87 are disordered. Positions P52–A87 are enriched in low complexity.

This sequence belongs to the TatA/E family. As to quaternary structure, the Tat system comprises two distinct complexes: a TatABC complex, containing multiple copies of TatA, TatB and TatC subunits, and a separate TatA complex, containing only TatA subunits. Substrates initially bind to the TatABC complex, which probably triggers association of the separate TatA complex to form the active translocon.

Its subcellular location is the cell membrane. In terms of biological role, part of the twin-arginine translocation (Tat) system that transports large folded proteins containing a characteristic twin-arginine motif in their signal peptide across membranes. TatA could form the protein-conducting channel of the Tat system. The chain is Sec-independent protein translocase protein TatA from Nocardia farcinica (strain IFM 10152).